Reading from the N-terminus, the 288-residue chain is NAD kinase (288 aa).

D70 (proton acceptor) is an active-site residue. Residues 70–71 (DG), 144–145 (ND), R155, K172, D174, 185–190 (TGYSLS), and Q245 contribute to the NAD(+) site.

The protein belongs to the NAD kinase family. Requires a divalent metal cation as cofactor.

It localises to the cytoplasm. The catalysed reaction is NAD(+) + ATP = ADP + NADP(+) + H(+). Its function is as follows. Involved in the regulation of the intracellular balance of NAD and NADP, and is a key enzyme in the biosynthesis of NADP. Catalyzes specifically the phosphorylation on 2'-hydroxyl of the adenosine moiety of NAD to yield NADP. The polypeptide is NAD kinase (Geobacter sp. (strain M21)).